The following is a 253-amino-acid chain: Phosphoglycerate mutase 2 (253 aa).

Position 3 is a phosphothreonine (threonine 3). Residues 10 to 17 (RHGESSWN), 23 to 24 (CG), arginine 62, 89 to 92 (ERHY), lysine 100, and 116 to 117 (RR) each bind substrate. The active-site Tele-phosphohistidine intermediate is histidine 11. Residues serine 14 and serine 15 each carry the phosphoserine modification. Glutamate 89 functions as the Proton donor/acceptor in the catalytic mechanism. Residue serine 118 is modified to Phosphoserine. Threonine 121 carries the post-translational modification Phosphothreonine. Phosphotyrosine occurs at positions 132 and 133. A Phosphoserine modification is found at serine 135. A Phosphothreonine modification is found at threonine 152. 187–188 (GN) is a binding site for substrate.

It belongs to the phosphoglycerate mutase family. BPG-dependent PGAM subfamily. In terms of assembly, homodimer. Interacts with ENO1.

It carries out the reaction (2R)-2-phosphoglycerate = (2R)-3-phosphoglycerate. The enzyme catalyses (2R)-3-phospho-glyceroyl phosphate = (2R)-2,3-bisphosphoglycerate + H(+). Interconversion of 3- and 2-phosphoglycerate with 2,3-bisphosphoglycerate as the primer of the reaction. Can also catalyze the reaction of EC 5.4.2.4 (synthase), but with a reduced activity. This Rattus norvegicus (Rat) protein is Phosphoglycerate mutase 2 (Pgam2).